The sequence spans 220 residues: MNAFVASVAPIAVAGSATLSSAVCAQKKAFFGAQVAAKKTTFEAAPARFIVRAEEEEAAPAEKVEKKAAAPKPFSVPTLNLNAPTPIFGGSTGGLLRKAEVEEFYSITWTGKSETVFELPTGGAAIMRAGENLLRLARKEQCIALGAQLKDKFKITDYKIYRVYPSGEVQFLHPKDGVFPEKVNPGRVAVGSNKRRIGQNPDPAKLKFKGQETFDSDLKL.

The N-terminal 53 residues, 1–53, are a transit peptide targeting the cyanelle; it reads MNAFVASVAPIAVAGSATLSSAVCAQKKAFFGAQVAAKKTTFEAAPARFIVRA. The tract at residues 192–220 is disordered; that stretch reads SNKRRIGQNPDPAKLKFKGQETFDSDLKL. Residues 209 to 220 are compositionally biased toward basic and acidic residues; sequence KGQETFDSDLKL.

The protein belongs to the PsaD family.

It localises to the plastid. The protein resides in the cyanelle thylakoid membrane. In terms of biological role, psaD can form complexes with ferredoxin and ferredoxin-oxidoreductase in photosystem I (PS I) reaction center. PSAD may encode the ferredoxin-docking protein. In Cyanophora paradoxa, this protein is Photosystem I reaction center subunit II, cyanelle (psaD).